We begin with the raw amino-acid sequence, 88 residues long: Antitoxin VapB21 (88 aa).

Antitoxin component of a type II toxin-antitoxin (TA) system. This is Antitoxin VapB21 (vapB21) from Mycobacterium tuberculosis (strain CDC 1551 / Oshkosh).